Reading from the N-terminus, the 232-residue chain is Flagellar L-ring protein (232 aa).

The N-terminal stretch at 1 to 21 (MQKNAAHTYAISSLLVLSLTG) is a signal peptide. Residue Cys-22 is the site of N-palmitoyl cysteine attachment. Cys-22 carries the S-diacylglycerol cysteine lipid modification.

Belongs to the FlgH family. The basal body constitutes a major portion of the flagellar organelle and consists of four rings (L,P,S, and M) mounted on a central rod.

The protein localises to the cell outer membrane. It localises to the bacterial flagellum basal body. Functionally, assembles around the rod to form the L-ring and probably protects the motor/basal body from shearing forces during rotation. The sequence is that of Flagellar L-ring protein from Escherichia coli O7:K1 (strain IAI39 / ExPEC).